Here is a 445-residue protein sequence, read N- to C-terminus: Damage suppressor protein (445 aa).

2 stretches are compositionally biased toward polar residues: residues 1 to 15 (MAST…SSTG) and 25 to 47 (SQGS…SATS). 2 disordered regions span residues 1-145 (MAST…HSVI) and 203-445 (YHSV…RKRK). Residues 61 to 73 (SSTTAGSSSTQGQ) are compositionally biased toward low complexity. Positions 74 to 87 (KFSTTPTDPKTFSS) are enriched in polar residues. A compositionally biased stretch (basic and acidic residues) spans 88 to 97 (DQKEKSKSPA). A compositionally biased stretch (low complexity) spans 117-138 (DAKSSGQSQGQSKDSGKSSSDS). The segment covering 207-228 (VGDKTDDKKEGEHSGDKKDDSK) has biased composition (basic and acidic residues). Residues 208 to 445 (GDKTDDKKEG…GGKAGGRKRK (238 aa)) are required and sufficient for DNA-binding and co-localization with nuclear DNA. Polar residues predominate over residues 245–256 (ETSGQAESSSGN). The segment covering 257 to 306 (EGAAPAKGRGRGRPPAAAKGVAKGAAKGAAASKGAKSGAESSKGGEQSSG) has biased composition (low complexity). Residues 329–338 (GEGGASGSEG) are compositionally biased toward gly residues. The required for nucleosome binding and for the protection of chromatin from hydroxyl radical-mediated DNA damage stretch occupies residues 360 to 445 (EPPRRSSRLT…GGKAGGRKRK (86 aa)). Residues 367–431 (RLTSSGTGAG…ASKAPQNGAG (65 aa)) are compositionally biased toward low complexity. Basic residues predominate over residues 432-445 (AKKKGGKAGGRKRK).

It localises to the nucleus. Unique chromatin-associating protein that contributes to the organism's exceptional tolerance to harsh environmental stresses. Binds with a higher affinity to nucleosomes than to free DNA. Protects chromatin from damage caused by hydroxyl radical-mediated cleavage induced by X-rays or treatment with hydrogen peroxide. Suppresses X-ray-induced DNA damage that includes single-strand breaks (SSBs) as well as more hazardous double-strand breaks (DSBs), and improves radiotolerance. Also shields DNA against reactive oxygen species (ROS). The chain is Damage suppressor protein from Ramazzottius varieornatus (Water bear).